Reading from the N-terminus, the 238-residue chain is Probable transcriptional regulatory protein SSU05_0402 (238 aa).

Belongs to the TACO1 family. YeeN subfamily.

Its subcellular location is the cytoplasm. The sequence is that of Probable transcriptional regulatory protein SSU05_0402 from Streptococcus suis (strain 05ZYH33).